Consider the following 1405-residue polypeptide: Tonsoku-like protein (1405 aa).

TPR repeat units follow at residues 23-56 (AVSC…YASM), 63-96 (AKAK…AKRL), 163-196 (ARCY…SKTH), 203-237 (HLCY…AKRF), 245-278 (CETL…NTPD), 314-347 (KGLY…AELN), and 355-388 (VPIY…NQDA). One copy of the LRR 1 repeat lies at 153 to 181 (ISKLEQLDMQARCYLNIGVVKEHMEAFQE). Residues 439 to 465 (MVRLRRLMLKHNMQVLVENLEADATAK) form an LRR 2 repeat. A disordered region spans residues 465-535 (KGIDLDQEES…RGNRTLVIKK (71 aa)). Residues 469–483 (LDQEESVGDDEEESD) show a composition bias toward acidic residues. ANK repeat units follow at residues 538–567 (KGET…TVNV), 571–600 (AGWL…ASAI), and 609–638 (DGIT…DATV). Disordered regions lie at residues 695-753 (FNAK…KEYR), 806-827 (KRIN…DTAL), and 841-880 (TPEN…KKHQ). 2 positions are modified to phosphoserine: serine 707 and serine 709. Positions 813-822 (LSRRTSKENF) are enriched in basic and acidic residues. A compositionally biased stretch (polar residues) spans 841-850 (TPENEYSQRQ). Residues 859-874 (SRSSSMSSNHSSSATS) are compositionally biased toward low complexity. Serine 893, serine 895, serine 899, and serine 902 each carry phosphoserine. LRR repeat units follow at residues 1085-1108 (QARL…QLAK), 1113-1137 (LLQL…LLCG), 1143-1166 (LELL…ILSK), 1186-1211 (LTEL…QLTQ), 1287-1311 (AKQL…YILD), and 1333-1357 (LQKL…VFSM).

The protein belongs to the Tonsoku family.

The protein resides in the nucleus. It is found in the nucleoplasm. Its subcellular location is the chromosome. In terms of biological role, histone reader involved in homologous recombination-mediated repair of double-strand breaks (DSBs) at stalled or collapsed replication forks. Specifically recognizes and binds histone H3.1. This is Tonsoku-like protein from Drosophila melanogaster (Fruit fly).